A 140-amino-acid polypeptide reads, in one-letter code: ATP synthase epsilon chain (140 aa).

It belongs to the ATPase epsilon chain family. As to quaternary structure, F-type ATPases have 2 components, CF(1) - the catalytic core - and CF(0) - the membrane proton channel. CF(1) has five subunits: alpha(3), beta(3), gamma(1), delta(1), epsilon(1). CF(0) has three main subunits: a, b and c.

The protein localises to the cell inner membrane. Produces ATP from ADP in the presence of a proton gradient across the membrane. This is ATP synthase epsilon chain from Colwellia psychrerythraea (strain 34H / ATCC BAA-681) (Vibrio psychroerythus).